The primary structure comprises 331 residues: Glycerol-3-phosphate dehydrogenase [NAD(P)+] (331 aa).

NADPH is bound by residues S10, W11, R31, R32, and K105. Residues K105 and G135 each coordinate sn-glycerol 3-phosphate. A139 lines the NADPH pocket. The sn-glycerol 3-phosphate site is built by K190, D243, S253, R254, and N255. The Proton acceptor role is filled by K190. R254 provides a ligand contact to NADPH. 2 residues coordinate NADPH: V279 and E281.

This sequence belongs to the NAD-dependent glycerol-3-phosphate dehydrogenase family.

The protein resides in the cytoplasm. It carries out the reaction sn-glycerol 3-phosphate + NAD(+) = dihydroxyacetone phosphate + NADH + H(+). The enzyme catalyses sn-glycerol 3-phosphate + NADP(+) = dihydroxyacetone phosphate + NADPH + H(+). It participates in membrane lipid metabolism; glycerophospholipid metabolism. In terms of biological role, catalyzes the reduction of the glycolytic intermediate dihydroxyacetone phosphate (DHAP) to sn-glycerol 3-phosphate (G3P), the key precursor for phospholipid synthesis. This chain is Glycerol-3-phosphate dehydrogenase [NAD(P)+], found in Corynebacterium diphtheriae (strain ATCC 700971 / NCTC 13129 / Biotype gravis).